Here is a 129-residue protein sequence, read N- to C-terminus: Large ribosomal subunit protein uL22 (129 aa).

Belongs to the universal ribosomal protein uL22 family. As to quaternary structure, part of the 50S ribosomal subunit.

This protein binds specifically to 23S rRNA; its binding is stimulated by other ribosomal proteins, e.g. L4, L17, and L20. It is important during the early stages of 50S assembly. It makes multiple contacts with different domains of the 23S rRNA in the assembled 50S subunit and ribosome. Functionally, the globular domain of the protein is located near the polypeptide exit tunnel on the outside of the subunit, while an extended beta-hairpin is found that lines the wall of the exit tunnel in the center of the 70S ribosome. This is Large ribosomal subunit protein uL22 from Brucella suis biovar 1 (strain 1330).